Here is a 150-residue protein sequence, read N- to C-terminus: Cytochrome c oxidase subunit 5A, mitochondrial (150 aa).

The transit peptide at 1-41 (MLGAALRRCAVAATTWAGPRGLLHSSRTPGPAAAIQSVRCY) directs the protein to the mitochondrion. The SIFI-degron signature appears at 2-17 (LGAALRRCAVAATTWA). Lys87 and Lys113 each carry N6-acetyllysine. A Phosphothreonine modification is found at Thr141.

This sequence belongs to the cytochrome c oxidase subunit 5A family. In terms of assembly, component of the cytochrome c oxidase (complex IV, CIV), a multisubunit enzyme composed of 14 subunits. The complex is composed of a catalytic core of 3 subunits MT-CO1, MT-CO2 and MT-CO3, encoded in the mitochondrial DNA, and 11 supernumerary subunits COX4I, COX5A, COX5B, COX6A, COX6B, COX6C, COX7A, COX7B, COX7C, COX8 and NDUFA4, which are encoded in the nuclear genome. The complex exists as a monomer or a dimer and forms supercomplexes (SCs) in the inner mitochondrial membrane with NADH-ubiquinone oxidoreductase (complex I, CI) and ubiquinol-cytochrome c oxidoreductase (cytochrome b-c1 complex, complex III, CIII), resulting in different assemblies (supercomplex SCI(1)III(2)IV(1) and megacomplex MCI(2)III(2)IV(2)). Interacts with AFG1L. Interacts with RAB5IF. In response to mitochondrial stress, the precursor protein is ubiquitinated by the SIFI complex in the cytoplasm before mitochondrial import, leading to its degradation. Within the SIFI complex, UBR4 initiates ubiquitin chain that are further elongated or branched by KCMF1.

It is found in the mitochondrion inner membrane. It participates in energy metabolism; oxidative phosphorylation. Component of the cytochrome c oxidase, the last enzyme in the mitochondrial electron transport chain which drives oxidative phosphorylation. The respiratory chain contains 3 multisubunit complexes succinate dehydrogenase (complex II, CII), ubiquinol-cytochrome c oxidoreductase (cytochrome b-c1 complex, complex III, CIII) and cytochrome c oxidase (complex IV, CIV), that cooperate to transfer electrons derived from NADH and succinate to molecular oxygen, creating an electrochemical gradient over the inner membrane that drives transmembrane transport and the ATP synthase. Cytochrome c oxidase is the component of the respiratory chain that catalyzes the reduction of oxygen to water. Electrons originating from reduced cytochrome c in the intermembrane space (IMS) are transferred via the dinuclear copper A center (CU(A)) of subunit 2 and heme A of subunit 1 to the active site in subunit 1, a binuclear center (BNC) formed by heme A3 and copper B (CU(B)). The BNC reduces molecular oxygen to 2 water molecules using 4 electrons from cytochrome c in the IMS and 4 protons from the mitochondrial matrix. The sequence is that of Cytochrome c oxidase subunit 5A, mitochondrial (COX5A) from Colobus guereza (Mantled guereza).